Consider the following 377-residue polypeptide: Succinyl-diaminopimelate desuccinylase (377 aa).

His68 is a binding site for Zn(2+). Residue Asp70 is part of the active site. Residue Asp101 participates in Zn(2+) binding. The active-site Proton acceptor is the Glu135. Residues Glu136, Glu164, and His350 each contribute to the Zn(2+) site.

The protein belongs to the peptidase M20A family. DapE subfamily. As to quaternary structure, homodimer. The cofactor is Zn(2+). Requires Co(2+) as cofactor.

It carries out the reaction N-succinyl-(2S,6S)-2,6-diaminopimelate + H2O = (2S,6S)-2,6-diaminopimelate + succinate. The protein operates within amino-acid biosynthesis; L-lysine biosynthesis via DAP pathway; LL-2,6-diaminopimelate from (S)-tetrahydrodipicolinate (succinylase route): step 3/3. Its function is as follows. Catalyzes the hydrolysis of N-succinyl-L,L-diaminopimelic acid (SDAP), forming succinate and LL-2,6-diaminopimelate (DAP), an intermediate involved in the bacterial biosynthesis of lysine and meso-diaminopimelic acid, an essential component of bacterial cell walls. The polypeptide is Succinyl-diaminopimelate desuccinylase (Vibrio cholerae serotype O1 (strain ATCC 39541 / Classical Ogawa 395 / O395)).